A 194-amino-acid chain; its full sequence is Molybdenum cofactor guanylyltransferase (194 aa).

Residues 12-14 (LAG), lysine 25, asparagine 53, aspartate 70, and aspartate 100 contribute to the GTP site. Aspartate 100 is a binding site for Mg(2+).

It belongs to the MobA family. Monomer. Mg(2+) is required as a cofactor.

It localises to the cytoplasm. It catalyses the reaction Mo-molybdopterin + GTP + H(+) = Mo-molybdopterin guanine dinucleotide + diphosphate. Its function is as follows. Transfers a GMP moiety from GTP to Mo-molybdopterin (Mo-MPT) cofactor (Moco or molybdenum cofactor) to form Mo-molybdopterin guanine dinucleotide (Mo-MGD) cofactor. The protein is Molybdenum cofactor guanylyltransferase of Aliivibrio fischeri (strain ATCC 700601 / ES114) (Vibrio fischeri).